The primary structure comprises 442 residues: tRNA-2-methylthio-N(6)-dimethylallyladenosine synthase (442 aa).

Residues 2 to 120 enclose the MTTase N-terminal domain; sequence KKVFIRTFGC…LPKMIVDKET (119 aa). [4Fe-4S] cluster contacts are provided by Cys-11, Cys-49, Cys-83, Cys-157, Cys-161, and Cys-164. The region spanning 143-375 is the Radical SAM core domain; the sequence is RVEGGAAFVS…NEVIEAETAR (233 aa). Positions 378–441 constitute a TRAM domain; it reads QTMVGTVQRC…TFSLRGKVVE (64 aa).

This sequence belongs to the methylthiotransferase family. MiaB subfamily. As to quaternary structure, monomer. It depends on [4Fe-4S] cluster as a cofactor.

It is found in the cytoplasm. It carries out the reaction N(6)-dimethylallyladenosine(37) in tRNA + (sulfur carrier)-SH + AH2 + 2 S-adenosyl-L-methionine = 2-methylsulfanyl-N(6)-dimethylallyladenosine(37) in tRNA + (sulfur carrier)-H + 5'-deoxyadenosine + L-methionine + A + S-adenosyl-L-homocysteine + 2 H(+). In terms of biological role, catalyzes the methylthiolation of N6-(dimethylallyl)adenosine (i(6)A), leading to the formation of 2-methylthio-N6-(dimethylallyl)adenosine (ms(2)i(6)A) at position 37 in tRNAs that read codons beginning with uridine. The chain is tRNA-2-methylthio-N(6)-dimethylallyladenosine synthase from Neisseria meningitidis serogroup B (strain ATCC BAA-335 / MC58).